The sequence spans 149 residues: Transcriptional repressor NrdR (149 aa).

A zinc finger lies at 3–34; it reads CPFCSATDTKVIDSRLVADGHQVRRRRECTEC. One can recognise an ATP-cone domain in the interval 49–139; that stretch reads PRVIKRDGTR…VYRAFEDVSQ (91 aa).

This sequence belongs to the NrdR family. The cofactor is Zn(2+).

In terms of biological role, negatively regulates transcription of bacterial ribonucleotide reductase nrd genes and operons by binding to NrdR-boxes. In Shewanella frigidimarina (strain NCIMB 400), this protein is Transcriptional repressor NrdR.